The following is a 347-amino-acid chain: Dihydroorotase (347 aa).

Zn(2+) contacts are provided by H17 and H19. Substrate-binding positions include 19–21 (HLR) and N45. The Zn(2+) site is built by K103, H140, and H178. K103 carries the post-translational modification N6-carboxylysine. H140 lines the substrate pocket. Residue L223 coordinates substrate. Residue D251 coordinates Zn(2+). D251 is an active-site residue. H255 and A267 together coordinate substrate.

It belongs to the metallo-dependent hydrolases superfamily. DHOase family. Class II DHOase subfamily. Homodimer. The cofactor is Zn(2+).

The enzyme catalyses (S)-dihydroorotate + H2O = N-carbamoyl-L-aspartate + H(+). The protein operates within pyrimidine metabolism; UMP biosynthesis via de novo pathway; (S)-dihydroorotate from bicarbonate: step 3/3. In terms of biological role, catalyzes the reversible cyclization of carbamoyl aspartate to dihydroorotate. In Pectobacterium atrosepticum (strain SCRI 1043 / ATCC BAA-672) (Erwinia carotovora subsp. atroseptica), this protein is Dihydroorotase.